A 70-amino-acid polypeptide reads, in one-letter code: Virion membrane protein OPG139 (70 aa).

A helical transmembrane segment spans residues 1 to 21 (MIGILLLIGICVAVTVAILYS). At 22-70 (MYNKIKNSQNPNPSPNLNSPPPEPKNTKFVNNLEKDHISSLYNLVKSSV) the chain is on the virion surface side. Positions 30–50 (QNPNPSPNLNSPPPEPKNTKF) are disordered. The span at 33–45 (NPSPNLNSPPPEP) shows a compositional bias: pro residues. S40 is modified (phosphoserine; by host).

Belongs to the orthopoxvirus OPG139 family. In terms of processing, phosphorylated by a OPG054-independent mechanism.

It localises to the virion membrane. Its function is as follows. Essential for the encapsidation of DNA into immature virions (IV) and the subsequent maturation of IV into mature virions (MV). This Homo sapiens (Human) protein is Virion membrane protein OPG139 (OPG139).